The chain runs to 332 residues: Holliday junction branch migration complex subunit RuvB (332 aa).

The segment at 1 to 181 (MSRILDNEMM…FGITGHMEYY (181 aa)) is large ATPase domain (RuvB-L). Residues Leu20, Arg21, Gly62, Lys65, Thr66, Thr67, 128–130 (EDF), Arg171, Tyr181, and Arg218 each bind ATP. Thr66 contributes to the Mg(2+) binding site. Positions 182–252 (AHADLTEIVE…ITDKALTMLD (71 aa)) are small ATPAse domain (RuvB-S). The interval 255 to 332 (HEGLDYVDQK…EHLGYEYSEK (78 aa)) is head domain (RuvB-H). Residues Arg291, Arg310, Arg312, and Arg315 each contribute to the DNA site.

The protein belongs to the RuvB family. As to quaternary structure, homohexamer. Forms an RuvA(8)-RuvB(12)-Holliday junction (HJ) complex. HJ DNA is sandwiched between 2 RuvA tetramers; dsDNA enters through RuvA and exits via RuvB. An RuvB hexamer assembles on each DNA strand where it exits the tetramer. Each RuvB hexamer is contacted by two RuvA subunits (via domain III) on 2 adjacent RuvB subunits; this complex drives branch migration. In the full resolvosome a probable DNA-RuvA(4)-RuvB(12)-RuvC(2) complex forms which resolves the HJ.

The protein resides in the cytoplasm. The enzyme catalyses ATP + H2O = ADP + phosphate + H(+). Its function is as follows. The RuvA-RuvB-RuvC complex processes Holliday junction (HJ) DNA during genetic recombination and DNA repair, while the RuvA-RuvB complex plays an important role in the rescue of blocked DNA replication forks via replication fork reversal (RFR). RuvA specifically binds to HJ cruciform DNA, conferring on it an open structure. The RuvB hexamer acts as an ATP-dependent pump, pulling dsDNA into and through the RuvAB complex. RuvB forms 2 homohexamers on either side of HJ DNA bound by 1 or 2 RuvA tetramers; 4 subunits per hexamer contact DNA at a time. Coordinated motions by a converter formed by DNA-disengaged RuvB subunits stimulates ATP hydrolysis and nucleotide exchange. Immobilization of the converter enables RuvB to convert the ATP-contained energy into a lever motion, pulling 2 nucleotides of DNA out of the RuvA tetramer per ATP hydrolyzed, thus driving DNA branch migration. The RuvB motors rotate together with the DNA substrate, which together with the progressing nucleotide cycle form the mechanistic basis for DNA recombination by continuous HJ branch migration. Branch migration allows RuvC to scan DNA until it finds its consensus sequence, where it cleaves and resolves cruciform DNA. This Streptococcus pneumoniae serotype 4 (strain ATCC BAA-334 / TIGR4) protein is Holliday junction branch migration complex subunit RuvB.